The chain runs to 248 residues: Probable transcriptional regulatory protein Plav_2114 (248 aa).

It belongs to the TACO1 family.

It is found in the cytoplasm. The sequence is that of Probable transcriptional regulatory protein Plav_2114 from Parvibaculum lavamentivorans (strain DS-1 / DSM 13023 / NCIMB 13966).